A 400-amino-acid polypeptide reads, in one-letter code: WW domain-containing transcription regulator protein 1 (400 aa).

A Glycyl lysine isopeptide (Lys-Gly) (interchain with G-Cter in ubiquitin) cross-link involves residue lysine 46. Positions 52 to 117 (FFKEPDSGSH…QQHAHLRQQS (66 aa)) are disordered. The segment covering 61–70 (HSRQSSTDSS) has biased composition (polar residues). 2 positions are modified to phosphoserine: serine 62 and serine 89. Residues 91–110 (PASLQLGPGAGAAGSPAQQH) are compositionally biased toward low complexity. The 34-residue stretch at 124–157 (LPLPPGWEMTFTATGQRYFLNHIEKITTWQDPRK) folds into the WW domain. The segment covering 192 to 211 (NHQHQQQMAPTNLSQQNHPT) has biased composition (polar residues). Residues 192-216 (NHQHQQQMAPTNLSQQNHPTQNPPA) form a disordered region. The required for interaction with PALS1 stretch occupies residues 222–400 (PNALTTQQQQ…NKSEPFLTWL (179 aa)). Phosphoserine occurs at positions 295 and 311. The PDZ-binding signature appears at 394-400 (EPFLTWL).

In terms of assembly, binds to SLC9A3R2 via the PDZ motif at the plasma membrane. Binds to YWHAZ in vivo and in vitro through the phosphoserine-binding motif RSHSSP. Interacts (via coiled-coil domain) with SMAD2 (via MH1 domain), SMAD3 and SMAD4. Interacts with MED15. Interacts with PAX8 and NKX2-1. Interacts with TEAD1, TEAD2, TEAD3 and TEAD4. Interacts (via WW domain) with PALS1. Interacts with LATS1. Interacts with YAP1 (when phosphorylated at 'Ser-112'). Interacts (via WW domain) with PRRG4 (via cytoplasmic domain). Interacts (via WW domain) with AMOTL2 (via PPXY motif); the interaction promotes WWTR1/TAZ localization to the cytoplasm and tight junctions, thereby inhibiting its transcriptional coactivator properties. Interacts (via WW domain) with AMOT; the interaction facilitates translocation of WWTR1/TAZ to the cytoplasm. In terms of processing, phosphorylated by LATS2 and STK3/MST2. Phosphorylation by LATS2 results in creation of 14-3-3 binding sites, retention in the cytoplasm, and functional inactivation. Phosphorylation results in the inhibition of transcriptional coactivation through YWHAZ-mediated nuclear export. Post-translationally, ubiquitinated at Lys-46; leading to proteasomal degradation. Deubiquitinated and stabilized by UCHL1 at Lys-46; leading to inhibition of osteoclastogenesis.

It localises to the cytoplasm. It is found in the nucleus. Its subcellular location is the cell membrane. The protein localises to the cell junction. The protein resides in the tight junction. Functionally, transcriptional coactivator which acts as a downstream regulatory target in the Hippo signaling pathway that plays a pivotal role in organ size control and tumor suppression by restricting proliferation and promoting apoptosis. The core of this pathway is composed of a kinase cascade wherein STK3/MST2 and STK4/MST1, in complex with its regulatory protein SAV1, phosphorylates and activates LATS1/2 in complex with its regulatory protein MOB1, which in turn phosphorylates and inactivates YAP1 oncoprotein and WWTR1/TAZ. WWTR1 enhances PAX8 and NKX2-1/TTF1-dependent gene activation. In conjunction with YAP1, involved in the regulation of TGFB1-dependent SMAD2 and SMAD3 nuclear accumulation. Plays a key role in coupling SMADs to the transcriptional machinery such as the mediator complex. Regulates embryonic stem-cell self-renewal, promotes cell proliferation and epithelial-mesenchymal transition. The chain is WW domain-containing transcription regulator protein 1 from Canis lupus familiaris (Dog).